Here is a 280-residue protein sequence, read N- to C-terminus: Protein YibA (280 aa).

The polypeptide is Protein YibA (yibA) (Escherichia coli O157:H7).